A 478-amino-acid chain; its full sequence is Lysosome membrane protein 2 (478 aa).

Over 1–4 the chain is Cytoplasmic; that stretch reads MGRC. Residues 5–27 form a helical membrane-spanning segment; the sequence is CFYTAGTLSLLLLVTSVTLLVAR. Over 28-433 the chain is Lumenal; that stretch reads VFQKAVDQTI…QLKSVINTTL (406 aa). 4 N-linked (GlcNAc...) asparagine glycosylation sites follow: asparagine 45, asparagine 68, asparagine 105, and asparagine 122. Positions 155-191 are important for interaction with GBA1; that stretch reads LIEAMLKAYQQKLFVIHTVHELLWGYKDEILSLVHIF. Residues asparagine 206, asparagine 224, asparagine 249, and asparagine 304 are each glycosylated (N-linked (GlcNAc...) asparagine). Cystine bridges form between cysteine 274–cysteine 329 and cysteine 312–cysteine 318. N-linked (GlcNAc...) asparagine glycans are attached at residues asparagine 325, asparagine 412, and asparagine 430. The helical transmembrane segment at 434-459 threads the bilayer; that stretch reads VVTNIPYIIMALGVFFGLVFTWLACR. The Cytoplasmic portion of the chain corresponds to 460-478; it reads GQGSMDEGTADERAPLIRT.

The protein belongs to the CD36 family. As to quaternary structure, interacts with GBA1. In terms of processing, acylated by palmitic acid group(s). Post-translationally, heavily glycosylated. In terms of tissue distribution, detected in the extracts of brain, heart, lung, liver and kidney.

Its subcellular location is the lysosome membrane. Its function is as follows. Acts as a lysosomal receptor for glucosylceramidase (GBA1) targeting. The polypeptide is Lysosome membrane protein 2 (Scarb2) (Mus musculus (Mouse)).